The following is a 405-amino-acid chain: Pentatricopeptide repeat-containing protein At3g14580, mitochondrial (405 aa).

The N-terminal 37 residues, methionine 1–arginine 37, are a transit peptide targeting the mitochondrion. The segment at asparagine 13–arginine 44 is disordered. PPR repeat units lie at residues threonine 94–glutamate 124, serine 130–proline 165, serine 166–isoleucine 200, aspartate 201–proline 235, asparagine 236–proline 270, aspartate 271–proline 305, asparagine 306–proline 340, and serine 341–proline 375.

It belongs to the PPR family. P subfamily.

The protein resides in the mitochondrion. The sequence is that of Pentatricopeptide repeat-containing protein At3g14580, mitochondrial from Arabidopsis thaliana (Mouse-ear cress).